A 118-amino-acid chain; its full sequence is Myotrophin (118 aa).

ANK repeat units lie at residues 1 to 30 (MGDK…DVNR), 34 to 65 (GGRK…NAAD), and 67 to 98 (HGIT…TVKG).

This sequence belongs to the myotrophin family.

Its subcellular location is the cytoplasm. It localises to the nucleus. It is found in the perinuclear region. In terms of biological role, regulates NF-kappa-B transcription factor activity. Promotes growth of cardiomyocytes, but not cardiomyocyte proliferation. Promotes cardiac muscle hypertrophy. Plays a role in the regulation of the growth of actin filaments. Inhibits the activity of the F-actin-capping protein complex. This chain is Myotrophin (mtpn), found in Xenopus tropicalis (Western clawed frog).